Reading from the N-terminus, the 158-residue chain is Transcriptional repressor NrdR (158 aa).

A zinc finger spans residues 3 to 34 (CPSCQNTDSRVLESRAADAGRSVRRRRECLHC). An ATP-cone domain is found at 49–139 (ITVLKRNGNR…VYRHFRGIND (91 aa)).

This sequence belongs to the NrdR family. The cofactor is Zn(2+).

Its function is as follows. Negatively regulates transcription of bacterial ribonucleotide reductase nrd genes and operons by binding to NrdR-boxes. This is Transcriptional repressor NrdR from Prochlorococcus marinus (strain MIT 9303).